Consider the following 300-residue polypeptide: Probable alpha-L-glutamate ligase (300 aa).

Positions 104–287 (LQLLARQGID…IASRMIAWIE (184 aa)) constitute an ATP-grasp domain. Residues Lys141, 178-179 (EY), Asp187, and 211-213 (RSN) each bind ATP. Asp248, Glu260, and Asn262 together coordinate Mg(2+). The Mn(2+) site is built by Asp248, Glu260, and Asn262.

Belongs to the RimK family. Requires Mg(2+) as cofactor. It depends on Mn(2+) as a cofactor.

The sequence is that of Probable alpha-L-glutamate ligase from Klebsiella pneumoniae (strain 342).